The chain runs to 267 residues: Type II pantothenate kinase (267 aa).

6-13 (DAGGTLIK) contacts ATP. The active-site Proton acceptor is Glu-70. Residues Thr-99, 121–125 (GGMIQ), Tyr-137, and Ser-225 each bind ATP.

It belongs to the type II pantothenate kinase family. Homodimer.

It localises to the cytoplasm. It catalyses the reaction (R)-pantothenate + ATP = (R)-4'-phosphopantothenate + ADP + H(+). It participates in cofactor biosynthesis; coenzyme A biosynthesis; CoA from (R)-pantothenate: step 1/5. In terms of biological role, catalyzes the phosphorylation of pantothenate (Pan), the first step in CoA biosynthesis. This chain is Type II pantothenate kinase, found in Staphylococcus aureus (strain bovine RF122 / ET3-1).